An 876-amino-acid polypeptide reads, in one-letter code: MNPSYKPSDVESAAQAQWSAADAYRVTEDASRKKYYACSMLPYPSGKLHMGHVRNYTINDMLTRYLRMSGYNVLMPMGWDAFGLPAENAALKNGVPPAKWTYENIDYMRGQLQAMGLAIDWSREIATCDPSYYKWNQWLFLKMLEKGIAYRKTQVVNWDPVDQTVLANEQVIDGKGWRTGATVERREIPGYYLKISDYAEELLEHTQHKLPGWPERVKLMQENWIGKSEGVRFAFTHDIQDASGRLIQDGRMYVFTTRADTIMGVTFCAVAPEHPLAAHAATLDPKVAAFIEECKSGGTTEAELATQEKKGVPTGLTVKHPITEEQVPVWVGNYVLINYGDGAVMGVPAHDERDFAFANKYGIEIIQVVLVDDEPHFDYHRWQDWYGDKQRGVTINSDNFSGMTHKEAVAAVAHALAQKGLGEMQTTWRLRDWGVSRQRYWGTPIPIIHCDEHGAVPVPEKDLPVVLPTDCVPDGSGNPLAKHEGFHAGVVCPVCGKPARRETDTMDTFVDSSWYFMRYCDPKNEQAMVAEGADYWMPMDQYIGGIEHAILHLLYARFWTKVMRDLGLVKVDEPFSKLLTQGMVLNHIYYHRDEKGGKNYHPPLEVTPTLDAQGRIVGGTTADGTKIEYGGVGKMGKSERNGVDPQDLIEKYGADTARLYTMFTAPPEATLEWNDAAVEGSYRFLRRVWNFGVAQADVAPVAFGGQAFGKAAQALRREVHTVLRQVDYDYQRMQYNTVVSGAMKLLNALEGFKPDGSAGDAAALREGLGILLRCLYPATPHITHQLWQHLGYDKELGDLLDAPWPVVDVAALEQDEIELMLQVNGKLRGALRVPAGASKAEIEALALSCDDFVKFAEGAPAKRVIVVPGRLVNVVI.

The short motif at 42-52 is the 'HIGH' region element; sequence PYPSGKLHMGH. The 'KMSKS' region motif lies at 634–638; it reads KMGKS. Residue Lys-637 coordinates ATP.

The protein belongs to the class-I aminoacyl-tRNA synthetase family.

The protein resides in the cytoplasm. The enzyme catalyses tRNA(Leu) + L-leucine + ATP = L-leucyl-tRNA(Leu) + AMP + diphosphate. The protein is Leucine--tRNA ligase of Variovorax paradoxus (strain S110).